Here is a 292-residue protein sequence, read N- to C-terminus: tRNA dimethylallyltransferase (292 aa).

10–17 (GPTASGKS) contributes to the ATP binding site. 12 to 17 (TASGKS) is a substrate binding site. 2 interaction with substrate tRNA regions span residues 35–38 (DSMQ) and 159–163 (QRIVR).

This sequence belongs to the IPP transferase family. Monomer. The cofactor is Mg(2+).

The enzyme catalyses adenosine(37) in tRNA + dimethylallyl diphosphate = N(6)-dimethylallyladenosine(37) in tRNA + diphosphate. Functionally, catalyzes the transfer of a dimethylallyl group onto the adenine at position 37 in tRNAs that read codons beginning with uridine, leading to the formation of N6-(dimethylallyl)adenosine (i(6)A). The protein is tRNA dimethylallyltransferase of Chelativorans sp. (strain BNC1).